We begin with the raw amino-acid sequence, 323 residues long: tRNA U34 carboxymethyltransferase (323 aa).

Carboxy-S-adenosyl-L-methionine-binding positions include K91, W105, K110, G130, 152–154 (DPS), 181–182 (IE), M196, Y200, and R315.

It belongs to the class I-like SAM-binding methyltransferase superfamily. CmoB family. Homotetramer.

It catalyses the reaction carboxy-S-adenosyl-L-methionine + 5-hydroxyuridine(34) in tRNA = 5-carboxymethoxyuridine(34) in tRNA + S-adenosyl-L-homocysteine + H(+). Functionally, catalyzes carboxymethyl transfer from carboxy-S-adenosyl-L-methionine (Cx-SAM) to 5-hydroxyuridine (ho5U) to form 5-carboxymethoxyuridine (cmo5U) at position 34 in tRNAs. The protein is tRNA U34 carboxymethyltransferase of Vibrio atlanticus (strain LGP32) (Vibrio splendidus (strain Mel32)).